A 255-amino-acid polypeptide reads, in one-letter code: Transcription factor CAULIFLOWER (255 aa).

The MADS-box domain maps to 1 to 61 (MGRGRVELKR…GKLFEYSSES (61 aa)). The region spanning 90-180 (QTNWSMEYSR…TKQIKERENI (91 aa)) is the K-box domain. Residues 90 to 198 (QTNWSMEYSR…EQLNRSVDDV (109 aa)) are a coiled coil.

As to quaternary structure, homodimer capable of binding to CArG-box sequences. Expressed in young flower primordia.

Its subcellular location is the nucleus. Probable transcription factor that promotes early floral meristem identity in synergy with APETALA1, FRUITFULL and LEAFY. Is required subsequently for the transition of an inflorescence meristem into a floral meristem. Seems to be partially redundant to the function of APETALA1. Positively regulates the APETALA1 and LEAFY expression. The chain is Transcription factor CAULIFLOWER (CAL) from Arabidopsis thaliana (Mouse-ear cress).